The following is a 131-amino-acid chain: Protein yippee-like PJ691.02 (131 aa).

Positions 12–109 (RCYVCAKCKT…LEMQDAVLQR (98 aa)) constitute a Yippee domain. Residues cysteine 16, cysteine 19, cysteine 72, and cysteine 75 each contribute to the Zn(2+) site.

This sequence belongs to the yippee family.

The polypeptide is Protein yippee-like PJ691.02 (Schizosaccharomyces pombe (strain 972 / ATCC 24843) (Fission yeast)).